Here is a 199-residue protein sequence, read N- to C-terminus: NADH-quinone oxidoreductase subunit C (199 aa).

This sequence belongs to the complex I 30 kDa subunit family. NDH-1 is composed of 14 different subunits. Subunits NuoB, C, D, E, F, and G constitute the peripheral sector of the complex.

It localises to the cell inner membrane. It catalyses the reaction a quinone + NADH + 5 H(+)(in) = a quinol + NAD(+) + 4 H(+)(out). Its function is as follows. NDH-1 shuttles electrons from NADH, via FMN and iron-sulfur (Fe-S) centers, to quinones in the respiratory chain. The immediate electron acceptor for the enzyme in this species is believed to be ubiquinone. Couples the redox reaction to proton translocation (for every two electrons transferred, four hydrogen ions are translocated across the cytoplasmic membrane), and thus conserves the redox energy in a proton gradient. This Paramagnetospirillum magneticum (strain ATCC 700264 / AMB-1) (Magnetospirillum magneticum) protein is NADH-quinone oxidoreductase subunit C.